A 62-amino-acid chain; its full sequence is uncharacterized protein (62 aa).

This is an uncharacterized protein from Escherichia coli (strain K12).